The sequence spans 323 residues: NADH-cytochrome b5 reductase 2 (323 aa).

The chain crosses the membrane as a helical span at residues 30 to 46; the sequence is LAPIYTAVGLTGLSVGL. An FAD-binding FR-type domain is found at 72–177; it reads QGWVDLKLSE…KGPLPKYQWE (106 aa). An FAD-binding site is contributed by 180–215; the sequence is KHEHIALIAGGTGITPMYQLIRQIFKNPDDKTKVTL.

The protein belongs to the flavoprotein pyridine nucleotide cytochrome reductase family. Requires FAD as cofactor.

The protein localises to the mitochondrion outer membrane. It carries out the reaction 2 Fe(III)-[cytochrome b5] + NADH = 2 Fe(II)-[cytochrome b5] + NAD(+) + H(+). Functionally, may mediate the reduction of outer membrane cytochrome b5. In Aspergillus oryzae (strain ATCC 42149 / RIB 40) (Yellow koji mold), this protein is NADH-cytochrome b5 reductase 2 (mcr1).